The following is an 84-amino-acid chain: ATP synthase subunit c (84 aa).

Helical transmembrane passes span 21 to 38 (ALGA…IGKI) and 60 to 80 (MIII…VCLL).

Belongs to the ATPase C chain family. F-type ATPases have 2 components, F(1) - the catalytic core - and F(0) - the membrane proton channel. F(1) has five subunits: alpha(3), beta(3), gamma(1), delta(1), epsilon(1). F(0) has three main subunits: a(1), b(2) and c(10-14). The alpha and beta chains form an alternating ring which encloses part of the gamma chain. F(1) is attached to F(0) by a central stalk formed by the gamma and epsilon chains, while a peripheral stalk is formed by the delta and b chains.

It is found in the cell inner membrane. F(1)F(0) ATP synthase produces ATP from ADP in the presence of a proton or sodium gradient. F-type ATPases consist of two structural domains, F(1) containing the extramembraneous catalytic core and F(0) containing the membrane proton channel, linked together by a central stalk and a peripheral stalk. During catalysis, ATP synthesis in the catalytic domain of F(1) is coupled via a rotary mechanism of the central stalk subunits to proton translocation. In terms of biological role, key component of the F(0) channel; it plays a direct role in translocation across the membrane. A homomeric c-ring of between 10-14 subunits forms the central stalk rotor element with the F(1) delta and epsilon subunits. In Phocaeicola vulgatus (strain ATCC 8482 / DSM 1447 / JCM 5826 / CCUG 4940 / NBRC 14291 / NCTC 11154) (Bacteroides vulgatus), this protein is ATP synthase subunit c.